The chain runs to 436 residues: UPF0597 protein YhaM (436 aa).

Belongs to the UPF0597 family.

The chain is UPF0597 protein YhaM from Salmonella paratyphi C (strain RKS4594).